Here is a 494-residue protein sequence, read N- to C-terminus: MNAPVKPSKLIKGATGDWEIVIGLEVHAQVSSKSKLFSGASTEFGGDPNAHVSLVDAAMPGMLPVINEECVKQAVRSGLGLNAQINLRSTFDRKNYFYPDLPQGYQISQFKSPIVGEGEVQVDVADGDGVTVGIERLHLEQDAGKLLHDQNPTMSLVDLNRSGVALMEIVSKPDIRSADQAKAYVTKLRTILRYLGTCDGDMEKGSLRADVNVSVRKPGAPLGTRCEIKNVNSIRFIGQAIDYEARRQIGILEDGGSIDQETRLFDAGKGETRSMRSKEEAHDYRYFPDPDLLPLQFDQAFVDALKAELPELPDAKKARFIADFGLSADDAGVLVSERESAEFYETVLSKLADAGRDGKLAANWVINELFGRLNKEGVAIEASPVSTAQLAAIVDLIGEATISGKIAKELFEIVWQEGGDPRATVEARGMRQVTDTGAIEKVVDDIVNANPDKVAQAQAKPALIGWFVGQVMKSSGGKANPQTVNDLLKSKLGL.

The protein belongs to the GatB/GatE family. GatB subfamily. In terms of assembly, heterotrimer of A, B and C subunits.

It catalyses the reaction L-glutamyl-tRNA(Gln) + L-glutamine + ATP + H2O = L-glutaminyl-tRNA(Gln) + L-glutamate + ADP + phosphate + H(+). The catalysed reaction is L-aspartyl-tRNA(Asn) + L-glutamine + ATP + H2O = L-asparaginyl-tRNA(Asn) + L-glutamate + ADP + phosphate + 2 H(+). Functionally, allows the formation of correctly charged Asn-tRNA(Asn) or Gln-tRNA(Gln) through the transamidation of misacylated Asp-tRNA(Asn) or Glu-tRNA(Gln) in organisms which lack either or both of asparaginyl-tRNA or glutaminyl-tRNA synthetases. The reaction takes place in the presence of glutamine and ATP through an activated phospho-Asp-tRNA(Asn) or phospho-Glu-tRNA(Gln). The polypeptide is Aspartyl/glutamyl-tRNA(Asn/Gln) amidotransferase subunit B (Rhodopseudomonas palustris (strain BisB18)).